A 487-amino-acid polypeptide reads, in one-letter code: E3 ubiquitin-protein ligase RNF8 (487 aa).

An FHA domain is found at 38-92; that stretch reads VTIGRGFSVTYQLISKVCPLMISRNHCVLKQNPEGQWTIMDNKSLNGVWLNRERL. The tract at residues 68–72 is required for interaction with PIWIL1; sequence QNPEG. A disordered region spans residues 135 to 195; it reads CLAPKNDHTT…PEKLHGKGEA (61 aa). A Phosphoserine modification is found at serine 157. Over residues 184–193 the composition is skewed to basic and acidic residues; sequence AEPEKLHGKG. The RING-type zinc finger occupies 405-443; sequence CIICSEYFIEAVTLNCAHSFCSFCISEWMKRKVECPICR.

Belongs to the RNF8 family. In terms of assembly, homodimer. Forms a E2-E3 ubiquitin ligase complex composed of the RNF8 homodimer and a E2 heterodimer of UBE2N and UBE2V2. Interacts with class III E2s, including UBE2E1, UBE2E2, and UBE2E3 and with UBE2N. Interacts with RXRA. Interacts (via FHA domain) with phosphorylated HERC2 (via C-terminus). Interacts with PIWIL1; leading to sequester RNF8 in the cytoplasm. Interacts with WRAP53/TCAB1. Autoubiquitinated through 'Lys-48' and 'Lys-63' of ubiquitin. 'Lys-63' polyubiquitination is mediated by UBE2N. 'Lys-29'-type polyubiquitination is also observed, but it doesn't require its own functional RING-type zinc finger.

Its subcellular location is the nucleus. The protein resides in the cytoplasm. It localises to the midbody. It is found in the chromosome. The protein localises to the telomere. It catalyses the reaction S-ubiquitinyl-[E2 ubiquitin-conjugating enzyme]-L-cysteine + [acceptor protein]-L-lysine = [E2 ubiquitin-conjugating enzyme]-L-cysteine + N(6)-ubiquitinyl-[acceptor protein]-L-lysine.. It participates in protein modification; protein ubiquitination. E3 ubiquitin-protein ligase that plays a key role in DNA damage signaling via 2 distinct roles: by mediating the 'Lys-63'-linked ubiquitination of histones H2A and H2AX and promoting the recruitment of DNA repair proteins at double-strand breaks (DSBs) sites, and by catalyzing 'Lys-48'-linked ubiquitination to remove target proteins from DNA damage sites. Following DNA DSBs, it is recruited to the sites of damage by ATM-phosphorylated MDC1 and catalyzes the 'Lys-63'-linked ubiquitination of histones H2A and H2AX, thereby promoting the formation of TP53BP1 and BRCA1 ionizing radiation-induced foci (IRIF). Also controls the recruitment of UIMC1-BRCC3 (RAP80-BRCC36) and PAXIP1/PTIP to DNA damage sites. Promotes the recruitment of NBN to DNA damage sites by catalyzing 'Lys-6'-linked ubiquitination of NBN. Also recruited at DNA interstrand cross-links (ICLs) sites and catalyzes 'Lys-63'-linked ubiquitination of histones H2A and H2AX, leading to recruitment of FAAP20 and Fanconi anemia (FA) complex, followed by interstrand cross-link repair. H2A ubiquitination also mediates the ATM-dependent transcriptional silencing at regions flanking DSBs in cis, a mechanism to avoid collision between transcription and repair intermediates. Promotes the formation of 'Lys-63'-linked polyubiquitin chains via interactions with the specific ubiquitin-conjugating UBE2N/UBC13 and ubiquitinates non-histone substrates such as PCNA. Substrates that are polyubiquitinated at 'Lys-63' are usually not targeted for degradation. Also catalyzes the formation of 'Lys-48'-linked polyubiquitin chains via interaction with the ubiquitin-conjugating UBE2L6/UBCH8, leading to degradation of substrate proteins such as CHEK2, JMJD2A/KDM4A and KU80/XRCC5: it is still unclear how the preference toward 'Lys-48'- versus 'Lys-63'-linked ubiquitination is regulated but it could be due to RNF8 ability to interact with specific E2 specific ligases. For instance, interaction with phosphorylated HERC2 promotes the association between RNF8 and UBE2N/UBC13 and favors the specific formation of 'Lys-63'-linked ubiquitin chains. Promotes non-homologous end joining (NHEJ) by promoting the 'Lys-48'-linked ubiquitination and degradation the of KU80/XRCC5. Following DNA damage, mediates the ubiquitination and degradation of JMJD2A/KDM4A in collaboration with RNF168, leading to unmask H4K20me2 mark and promote the recruitment of TP53BP1 at DNA damage sites. Following DNA damage, mediates the ubiquitination and degradation of POLD4/p12, a subunit of DNA polymerase delta. In the absence of POLD4, DNA polymerase delta complex exhibits higher proofreading activity. In addition to its function in damage signaling, also plays a role in higher-order chromatin structure by mediating extensive chromatin decondensation. Involved in the activation of ATM by promoting histone H2B ubiquitination, which indirectly triggers histone H4 'Lys-16' acetylation (H4K16ac), establishing a chromatin environment that promotes efficient activation of ATM kinase. Required in the testis, where it plays a role in the replacement of histones during spermatogenesis. At uncapped telomeres, promotes the joining of deprotected chromosome ends by inducing H2A ubiquitination and TP53BP1 recruitment, suggesting that it may enhance cancer development by aggravating telomere-induced genome instability in case of telomeric crisis. Promotes the assembly of RAD51 at DNA DSBs in the absence of BRCA1 and TP53BP1 Also involved in class switch recombination in immune system, via its role in regulation of DSBs repair. May be required for proper exit from mitosis after spindle checkpoint activation and may regulate cytokinesis. May play a role in the regulation of RXRA-mediated transcriptional activity. Not involved in RXRA ubiquitination by UBE2E2. In Rattus norvegicus (Rat), this protein is E3 ubiquitin-protein ligase RNF8.